We begin with the raw amino-acid sequence, 1759 residues long: Histone-lysine N-methyltransferase ASHH2 (1759 aa).

3 stretches are compositionally biased toward basic and acidic residues: residues 154–165, 197–206, and 215–224; these read QEKEAPQAKEDE, ETTKHIKPDE, and RFDDGGKEGR. Disordered regions lie at residues 154 to 181, 197 to 237, 437 to 482, 515 to 556, and 738 to 816; these read QEKEAPQAKEDEGYGGTTLPIGGSGIDT, ETTK…GSSD, CEAG…IESI, SNNI…NRNI, and DELR…VGRI. Residues 462–472 show a composition bias toward basic residues; sequence SARHLRKSSRK. The span at 530–556 shows a compositional bias: polar residues; that stretch reads RSQGNLNNGEHNRSSHNGNVEGSNRNI. The segment covering 758–775 has biased composition (basic residues); the sequence is KKAKHPKSKSNGTKKGKS. Basic and acidic residues-rich tracts occupy residues 776 to 797 and 804 to 816; these read KFSESAKDGRKNESHEGVEQRK and GRDDSDYPEVGRI. Residues 859–912 form a CW-type zinc finger; it reads YSTESAWVRCDDCFKWRRIPASVVGSIDESSRWICMNNSDKRFADCSKSQEMSN. Zn(2+) contacts are provided by Cys868, Cys871, Cys893, and Cys904. The AWS domain maps to 974 to 1024; the sequence is DEIMVCHCKPSPDGRLGCGEECLNRMLNIECLQGTCPAGDLCSNQQFQKRK. The SET domain maps to 1026-1143; the sequence is VKFERFQSGK…KGQELTFDYN (118 aa). Tyr1142 provides a ligand contact to S-adenosyl-L-methionine. A Post-SET domain is found at 1151-1167; it reads AAKKCYCGSSHCRGYIG. Disordered regions lie at residues 1225 to 1253, 1271 to 1345, 1496 to 1606, and 1727 to 1759; these read GYKDLAPDNTQTQSSVSVKLPEREIPPPL, AVQQ…PGVN, ERSE…FSSP, and KQSVPPWLRNNGGEKTANSPIPGNLTLEKKLNS. The segment covering 1232-1241 has biased composition (polar residues); the sequence is DNTQTQSSVS. Over residues 1284-1293 the composition is skewed to low complexity; the sequence is STSPTSSSLS. Basic and acidic residues predominate over residues 1304–1316; sequence KTTKHGSGEDKKI. Positions 1317 to 1326 are enriched in basic residues; that stretch reads LPRPRPRMKT. Over residues 1511 to 1521 the composition is skewed to basic and acidic residues; it reads ASQEPRYDHQS. Over residues 1530–1556 the composition is skewed to polar residues; sequence SVTSSKAATPETASVSEGYSEPNSGLP. Positions 1566 to 1577 are enriched in basic and acidic residues; that stretch reads RWDQPSKTKEQR. A compositionally biased stretch (polar residues) spans 1581-1594; it reads ILSQQTDETNGNQD.

This sequence belongs to the class V-like SAM-binding methyltransferase superfamily. Histone-lysine methyltransferase family. SET2 subfamily. As to quaternary structure, interacts with FRI and SUF4, two components of the transcription activator complex FRI-C, and with SWC6, a component of the SWR1 chromatin-remodeling complex. Interacts with BZR2/BES1 and IWS1. As to expression, ubiquitous, with higher levels in young tissues, including shoot and root apex. Expressed in ovules, tapetum layer and microspores.

It localises to the nucleus. Its subcellular location is the chromosome. The protein resides in the centromere. The catalysed reaction is N(6)-methyl-L-lysyl(36)-[histone H3] + S-adenosyl-L-methionine = N(6),N(6)-dimethyl-L-lysyl(36)-[histone H3] + S-adenosyl-L-homocysteine + H(+). It catalyses the reaction N(6),N(6)-dimethyl-L-lysyl(36)-[histone H3] + S-adenosyl-L-methionine = N(6),N(6),N(6)-trimethyl-L-lysyl(36)-[histone H3] + S-adenosyl-L-homocysteine + H(+). Histone methyltransferase involved in di and tri-methylation of 'Lys-36' of histone H3 (H3K36me2 and H3K36me3). Binds to H3 already mono- or di-methylated on 'Lys-4'(H3K4me1 or H3K4me2), but not to H3K4me3. H3K4me and H3K36me represent specific tags for epigenetic transcriptional activation. Positively regulates FLC transcription to prevent early flowering transition. Required for flowering transition in response to vernalization and for the maintenance of FLC expression in late embryos, but dispensable for the initial reactivation in early embryos during reprogramming. Also seems to modulate several traits including floral organ size, root size and dormancy. Promotes apical dominance. Directly involved in the tri-methylation of 'Lys-36' of histone H3 (H3K36me3) at LAZ5 chromatin to maintain a transcriptionally active state of LAZ5, a TIR-NB-LRR protein involved in innate immunity. Required for brassinosteroid (BR)-induced gene expression and histone H3 trimethylation on 'Lys-36' (H3K36me3) in BR-regulated genes. The sequence is that of Histone-lysine N-methyltransferase ASHH2 from Arabidopsis thaliana (Mouse-ear cress).